We begin with the raw amino-acid sequence, 1331 residues long: Retrotransposon-like protein 1 (1331 aa).

Disordered regions lie at residues 1–123 (MMEP…SQED), 128–147 (TDLAESEEDESPEEPDSSTV), 556–595 (EADEETSDQPSSDGSDDLSESEPSELQQAGDSDQSEETFY), and 971–1033 (PSSE…DEPN). The segment covering 19 to 30 (SSKQMESSEGSS) has biased composition (low complexity). Acidic residues-rich tracts occupy residues 109-123 (EMEEEEDNPWESQED), 128-143 (TDLAESEEDESPEEPD), and 569-578 (GSDDLSESEP). Low complexity predominate over residues 992–1001 (RRVATTTRPT). Residues 1015–1024 (PESEDEEESE) show a composition bias toward acidic residues. Transmembrane regions (helical) follow at residues 1070–1090 (FYRSLLFWKNLLAMAALLVML) and 1117–1137 (LFLDASLLTSSGIATAVTQLF). The disordered stretch occupies residues 1309 to 1331 (SPPREGATLEELPSDADEDAGLD). The segment covering 1320–1331 (LPSDADEDAGLD) has biased composition (acidic residues).

It localises to the membrane. In terms of biological role, plays an essential role in capillaries endothelial cells for the maintenance of feto-maternal interface and for development of the placenta. The sequence is that of Retrotransposon-like protein 1 (RTL1) from Bos taurus (Bovine).